Consider the following 975-residue polypeptide: Glycine dehydrogenase (decarboxylating) (975 aa).

Position 723 is an N6-(pyridoxal phosphate)lysine (lysine 723).

Belongs to the GcvP family. As to quaternary structure, the glycine cleavage system is composed of four proteins: P, T, L and H. Pyridoxal 5'-phosphate serves as cofactor.

It catalyses the reaction N(6)-[(R)-lipoyl]-L-lysyl-[glycine-cleavage complex H protein] + glycine + H(+) = N(6)-[(R)-S(8)-aminomethyldihydrolipoyl]-L-lysyl-[glycine-cleavage complex H protein] + CO2. Its function is as follows. The glycine cleavage system catalyzes the degradation of glycine. The P protein binds the alpha-amino group of glycine through its pyridoxal phosphate cofactor; CO(2) is released and the remaining methylamine moiety is then transferred to the lipoamide cofactor of the H protein. The protein is Glycine dehydrogenase (decarboxylating) of Burkholderia thailandensis (strain ATCC 700388 / DSM 13276 / CCUG 48851 / CIP 106301 / E264).